We begin with the raw amino-acid sequence, 285 residues long: Large ribosomal subunit protein uL1m (285 aa).

Residues 1–19 (MLSVVAIPKICVTGPARRC) constitute a mitochondrion transit peptide.

The protein belongs to the universal ribosomal protein uL1 family. In terms of assembly, component of the mitochondrial large ribosomal subunit (mt-LSU). Mature yeast 74S mitochondrial ribosomes consist of a small (37S) and a large (54S) subunit. The 37S small subunit contains a 15S ribosomal RNA (15S mt-rRNA) and 34 different proteins. The 54S large subunit contains a 21S rRNA (21S mt-rRNA) and 46 different proteins.

The protein localises to the mitochondrion. Its function is as follows. Component of the mitochondrial ribosome (mitoribosome), a dedicated translation machinery responsible for the synthesis of mitochondrial genome-encoded proteins, including at least some of the essential transmembrane subunits of the mitochondrial respiratory chain. The mitoribosomes are attached to the mitochondrial inner membrane and translation products are cotranslationally integrated into the membrane. The sequence is that of Large ribosomal subunit protein uL1m (MRPL1) from Saccharomyces cerevisiae (strain ATCC 204508 / S288c) (Baker's yeast).